Consider the following 358-residue polypeptide: Phospho-N-acetylmuramoyl-pentapeptide-transferase (358 aa).

Transmembrane regions (helical) follow at residues 24 to 44 (FRSIYAMITALLLAFIVGPWV), 73 to 93 (TMGGVLILVCIVVPTLLWADL), 95 to 115 (NVFIWLTLLIIVGYGVLGFVD), 134 to 154 (MFWQVLLAAGVGIFLFYLPGF), 169 to 189 (ELGILFIPFVTLVIVGASNAV), 197 to 217 (GLAIGPVAINAGTYLLFCYIA), 233 to 253 (GAGELAVLCGAMVGAGLGFLW), 261 to 281 (VFMGDVGSLSLGGALGTLAVL), 286 to 306 (ILLVIVGGVFVVEALSVIFQV), and 335 to 355 (KIIVRFWIITIILALVAISTL).

The protein belongs to the glycosyltransferase 4 family. MraY subfamily. It depends on Mg(2+) as a cofactor.

Its subcellular location is the cell inner membrane. The catalysed reaction is UDP-N-acetyl-alpha-D-muramoyl-L-alanyl-gamma-D-glutamyl-meso-2,6-diaminopimeloyl-D-alanyl-D-alanine + di-trans,octa-cis-undecaprenyl phosphate = di-trans,octa-cis-undecaprenyl diphospho-N-acetyl-alpha-D-muramoyl-L-alanyl-D-glutamyl-meso-2,6-diaminopimeloyl-D-alanyl-D-alanine + UMP. It functions in the pathway cell wall biogenesis; peptidoglycan biosynthesis. Catalyzes the initial step of the lipid cycle reactions in the biosynthesis of the cell wall peptidoglycan: transfers peptidoglycan precursor phospho-MurNAc-pentapeptide from UDP-MurNAc-pentapeptide onto the lipid carrier undecaprenyl phosphate, yielding undecaprenyl-pyrophosphoryl-MurNAc-pentapeptide, known as lipid I. This chain is Phospho-N-acetylmuramoyl-pentapeptide-transferase, found in Geobacter sp. (strain M21).